The following is a 260-amino-acid chain: MPRFAANLSMMYNEHAFLDRFAAAAADGFRAVEFLFPYEHAAAELRARLDANGLTQALFNAAPGDWAAGERGLAALPGREADFRGTIGRALEYAGVIGNDRIHVMAGLIPADADRARCRATYLENLAFAANAAAAQGVTVLIEPINTRDMPGYFLNRQDDGQAICKEVGAANLKVQFDCYHCQIVEGDVAMKLKRDIAGIGHIQIAGVPERHEPDVGELNYPYLFEVMDTLGYDGWIGCEYRPRAGTSAGLGWLKPYLGR.

Glu-143 acts as the Proton donor/acceptor in catalysis. Residues Glu-143, Asp-178, Gln-204, and Glu-240 each coordinate Mg(2+). The Proton donor/acceptor role is filled by Glu-240.

The protein belongs to the hyi family. OtnI subfamily.

The catalysed reaction is 2-dehydro-L-erythronate = 3-dehydro-L-erythronate. The enzyme catalyses 2-dehydro-D-erythronate = 3-dehydro-D-erythronate. Its function is as follows. Catalyzes the isomerization of 2-oxo-tetronate to 3-oxo-tetronate. The polypeptide is 2-oxo-tetronate isomerase (Cupriavidus necator (strain ATCC 17699 / DSM 428 / KCTC 22496 / NCIMB 10442 / H16 / Stanier 337) (Ralstonia eutropha)).